We begin with the raw amino-acid sequence, 466 residues long: FERM domain-containing protein 8 (466 aa).

Methionine 1 carries the N-acetylmethionine modification. Positions 1 to 21 are disordered; sequence MEGAEGNAGQPGPAERSHRSS. Position 24 is a phosphoserine (serine 24). The 348-residue stretch at 30–377 folds into the FERM domain; sequence ADVLVYLADD…YCIELSQAAE (348 aa). Positions 379–409 are disordered; it reads TLSQESASGPHEAPSPSPPPTQRPKLRRQGS. Serine 384 is subject to Phosphoserine. Positions 391 to 400 are enriched in pro residues; the sequence is APSPSPPPTQ. The residue at position 409 (serine 409) is a Phosphoserine. Threonine 420 carries the post-translational modification Phosphothreonine. Serine 440 and serine 447 each carry phosphoserine. The segment covering 442–460 has biased composition (polar residues); it reads FSRQLSSSQGSYTVVQPTD. Residues 442–466 are disordered; it reads FSRQLSSSQGSYTVVQPTDDSLEQS.

As to quaternary structure, interacts with iRhom proteins, including iRhom2/RHBDF2 (via cytoplasmic N-termini); this interaction leads to mutual protein stabilization. Interacts with LRP6; this interaction affects LRP6-binding to AXIN1. Widely expressed (at protein level).

The protein resides in the cytoplasm. It is found in the cytosol. The protein localises to the cell membrane. Its function is as follows. Promotes the cell surface stability of iRhom1/RHBDF1 and iRhom2/RHBDF2 and prevents their degradation via the endolysosomal pathway. By acting on iRhoms, involved in ADAM17-mediated shedding of TNF, amphiregulin/AREG, HBEGF and TGFA from the cell surface. Negatively regulates Wnt signaling, possibly by antagonizing the recruitment of AXIN1 to LRP6. In Mus musculus (Mouse), this protein is FERM domain-containing protein 8 (Frmd8).